Here is a 346-residue protein sequence, read N- to C-terminus: Putative transmembrane protein ORF346 (346 aa).

Transmembrane regions (helical) follow at residues 67-87 (LPIILLFVASVPARFIYCIVY), 104-124 (IINPILDFFTAPLVYLAVGLT), 134-154 (PPYLIGVLTDACLPGIVSGIY), 156-176 (AIGDIFYTIGYGIGFILGLFI), 181-201 (IILYSICTLVTFGLTFGLCLS), and 219-241 (YPFSFLAGLLQNYINCGCVLGSY). Positions 294 to 346 (SEYPHSENGSGGSGGSGSGSGSGGSGSGGNSGSGGSGSGSSGSGGNSGSGNNG) are disordered. Residues 302–346 (GSGGSGGSGSGSGSGGSGSGGNSGSGGSGSGSSGSGGNSGSGNNG) are compositionally biased toward gly residues.

The protein localises to the host membrane. The polypeptide is Putative transmembrane protein ORF346 (Acidianus bottle-shaped virus (isolate Italy/Pozzuoli) (ABV)).